The primary structure comprises 234 residues: Orotidine 5'-phosphate decarboxylase (234 aa).

Substrate-binding positions include aspartate 10, lysine 31, aspartate 58–threonine 67, threonine 121, arginine 183, glutamine 192, glycine 212, and arginine 213. Lysine 60 acts as the Proton donor in catalysis.

The protein belongs to the OMP decarboxylase family. Type 1 subfamily. As to quaternary structure, homodimer.

The enzyme catalyses orotidine 5'-phosphate + H(+) = UMP + CO2. It participates in pyrimidine metabolism; UMP biosynthesis via de novo pathway; UMP from orotate: step 2/2. Catalyzes the decarboxylation of orotidine 5'-monophosphate (OMP) to uridine 5'-monophosphate (UMP). The protein is Orotidine 5'-phosphate decarboxylase of Lysinibacillus sphaericus (strain C3-41).